A 261-amino-acid polypeptide reads, in one-letter code: Sugar fermentation stimulation protein homolog (261 aa).

The interval 1-23 (MTDSAKPQNPDPGHESRRVAPLA) is disordered.

It belongs to the SfsA family.

This Syntrophobacter fumaroxidans (strain DSM 10017 / MPOB) protein is Sugar fermentation stimulation protein homolog.